The following is a 386-amino-acid chain: 2,3-diketo-5-methylthiopentyl-1-phosphate enolase (386 aa).

The active-site Proton acceptor is lysine 85. Substrate is bound by residues lysine 131, 157–160 (KDDE), histidine 248, glycine 316, and 338–339 (GT). Mg(2+) contacts are provided by lysine 157, aspartate 159, and glutamate 160. Residue lysine 157 is modified to N6-carboxylysine.

The protein belongs to the RuBisCO large chain family. Type IV subfamily. As to quaternary structure, homodimer. Requires Mg(2+) as cofactor.

It catalyses the reaction 5-methylsulfanyl-2,3-dioxopentyl phosphate = 2-hydroxy-5-methylsulfanyl-3-oxopent-1-enyl phosphate. It functions in the pathway amino-acid biosynthesis; L-methionine biosynthesis via salvage pathway; L-methionine from S-methyl-5-thio-alpha-D-ribose 1-phosphate: step 3/6. Catalyzes the enolization of 2,3-diketo-5-methylthiopentyl-1-phosphate (DK-MTP-1-P) into 2-hydroxy-3-keto-5-methylthiopentenyl-1-phosphate (HK-MTPenyl-1-P). In Microcystis aeruginosa, this protein is 2,3-diketo-5-methylthiopentyl-1-phosphate enolase (mtnW).